The sequence spans 207 residues: Putative zinc finger protein 137 (207 aa).

A C2H2-type 1 zinc finger spans residues 72–94 (CKCNDCHKVFSNATTIANHWRIH). The C2H2-type 2; degenerate zinc finger occupies 100-122 (YKCNKCGKIFRHRSYLAVYQRTH). Residues 128-150 (YKYHDCGKVFSQASSYAKHRRIH) form a C2H2-type 3; degenerate zinc finger. 2 consecutive C2H2-type zinc fingers follow at residues 156-178 (HKCD…QRIH) and 184-206 (YKCL…QKIH).

Belongs to the krueppel C2H2-type zinc-finger protein family.

Its subcellular location is the nucleus. May be involved in transcriptional regulation. The polypeptide is Putative zinc finger protein 137 (ZNF137P) (Homo sapiens (Human)).